Reading from the N-terminus, the 326-residue chain is Ribosome biogenesis protein BRX1 homolog (326 aa).

A compositionally biased stretch (basic and acidic residues) spans 1-17 (MVKPSKILEKIKKRTEP). The interval 1–66 (MVKPSKILEK…EENKNIEENK (66 aa)) is disordered. Residues 22-57 (VVEEESDEEIIEQEGSEEEEEIVEEESEEEEEEVEE) show a composition bias toward acidic residues. Residues 75–268 (KRVLFTSTRG…IDKIFSDGFG (194 aa)) enclose the Brix domain.

Belongs to the BRX1 family.

It localises to the nucleus. The protein resides in the nucleolus. Its function is as follows. Required for biogenesis of the 60S ribosomal subunit. In Dictyostelium discoideum (Social amoeba), this protein is Ribosome biogenesis protein BRX1 homolog (bxdc2).